A 330-amino-acid chain; its full sequence is Phosphate acyltransferase (330 aa).

This sequence belongs to the PlsX family. In terms of assembly, homodimer. Probably interacts with PlsY.

The protein localises to the cytoplasm. The catalysed reaction is a fatty acyl-[ACP] + phosphate = an acyl phosphate + holo-[ACP]. It functions in the pathway lipid metabolism; phospholipid metabolism. In terms of biological role, catalyzes the reversible formation of acyl-phosphate (acyl-PO(4)) from acyl-[acyl-carrier-protein] (acyl-ACP). This enzyme utilizes acyl-ACP as fatty acyl donor, but not acyl-CoA. The polypeptide is Phosphate acyltransferase (Bacillus cytotoxicus (strain DSM 22905 / CIP 110041 / 391-98 / NVH 391-98)).